The chain runs to 265 residues: uncharacterized protein (265 aa).

Positions 1 to 23 (MNYFRILYCSVLLFFSFFSCTSA) are cleaved as a signal peptide. In terms of domain architecture, NodB homology spans 67-248 (KEIYLTFDNG…TLKQQGYTFK (182 aa)).

It belongs to the polysaccharide deacetylase family.

This is an uncharacterized protein from Geobacillus stearothermophilus (Bacillus stearothermophilus).